The following is a 2522-amino-acid chain: MSVHDVGGRRRFEDSELTLRIYPGIIAEGTIYCPVAARKITSAAEVIEQVIDRLQLDRTKCYVLAEVKEFGGEEWILNPTDYPVQRMMLWPRMALENRFSSEDYRFLLREKNLDGSIHYGNLQMWLQVTEERRRMVERGFLPQPLPKDFDDLCNLPDLNEKTLLDNLRSRFKQEKIYTYVGSILIVINPFKFLPIYNPKYVKMYDNHQLGKLEPHIYAVADVAYHAMLQSRQNQCIVISGESGSGKTQSTNFLIHHLTALSQKGFASGVEQIILGAGPVLEAFGNAKTAHNNNSSRFGKFIQVNYQESGTVRGAYVEKYLLEKSRLVYQEHNERNYHVFYYLLAGTSEEERTAFHLKKPEEYHYLNQMTKKPHRPHWGNYYENEPDCFTVEGEDLKHDFERLQLAMEMVGFLPTTRKQIFSLLSAILHLGNIRYKKKIYRDDSIDICNPEVLPVVSELLEVKEEMLFEALTTRKTVTVGEKLIVPYKLAEAGTVRDSMAKSLYSALFDWIVFRINHALLNQRDLEESAKILSIGVLDIFGFEDYENNSFEQFCINFANERLQHYFNQHIFKLEQEEYRAEGITWHNIDYIDNTSCITLISKKPTALLHLLDEECNFPQATNQTLLDKFKRQHEGNSYIEFPAVMEPAFIIKHYAGKVKYGVKDFREKNTDHMRPDIVALLKSSKNAFICGLIGIDPVATFRWAVLRAYFRAMVAFRDAGKRHVEKRSGHDAAAPAVKSVDSFSFLHHPVHQRSLEILQRCKEEKYSVNRRNPRTPLSDLQGSNAINQREGWNGRPGRQNRLSSFGSFSEEEGIFINSTSSKLLERAHGILMRNKNYKMKPSLPKHLLDVKSLKYLSNLTLQDRITKSLLHLHKKKKPPSISAQFQASLNKLMETLGQSQPYFVKCIRSNSEKLPLRFNDSLVLRQLRYTGMLETVRIRQSGYSIKYTFQDFARHFHVLLPEGSNQASQEAIRQYLQQVDLTPEGFQVGRTMVFLREIERQRLQDLLHKEVLSRIVYLQRRFRALLERKNFLRVRQAACQIQNWWRSCQSLQRDSQLEYDMRVQEGAVVCIQSAWRGFRERRRLLLWREASVLIQRTWRLYRQRRAALQIQTAWRRHRARELFLRQRDATIRLQAVGRGYLARQRFRELQKQRLKITHLPNGKASLLTEEDKLEDMGLDASMLEDSFEEQDRSKQALSSAVEASGAGVLEEMEVEMMEGMAPAQPSPEVTIRERPRTLEDPNQRTRAKRESRRMRELEQAKFSLELLKVRSTGGTSPSDERRWSMELVSEIAHTPQGTPDSQSSKGSFELLNIDDYFKDKAPCAEPEDLGSPSSVPDQHNVLPSDTSTPDILSKPDDQSKPPRMQYSLPTFYTPPSESSSLVIKSTTNSVTPCPDGLSKPSKDKKESTRRPMVVVISMQKETLLNEADVKPLEVKDSAAQTSEPPSPAQPSTDSSYVLEKLEKLNEEKEERQKHQRQQNEKEMMEQIRQQTHILEEQRRNLVQNEREKLEKQRAETLRRIEQSRQESSGGRTDRPAPIAQPEPDLTSQRPAREKDGAPLILRDRPKDAQNLAEGWAPKLTLESRGDEARSRINKKPSNQNVNISMSERPGNIFFSPKTKIAYSKLNKDLANQEKTPGAQNEVSLLGYKSTKTEVGRPGHKKARMARTRSDFLTRSSSTQGEGESEEEEYDETPLYAGTPLPKQDSEESAVEACHSDSEMLTTAAEEQKNRCKTLPSGELGKHDTRKNSHGDGRVRGKMRFWGKAKNAEKKSSRERLLCGSDTLEGDYTEATLLMEEGVERLSPPHSPDLTLQREFKENKEPSPKVKRRRSVKISSVALEPVQWQNDALQILTCTSDYKSMNDFLMKKITDLDTEDGKKDTMVDVVFKKALKEFRVNIFNSYSTALAMDDGKSIRYKDLYALFEQILEKNMRQEQRDWSESPVKVWVNTFKVFLDEFMTEHKPLDSSLGKAPKPDRKKRRKKDTDVVEEHNGHIFKSTQYSIPTYCEYCSSLIWMMDKACVCKLCRYACHRKCCQKMTTKCSKKYDPELSSRQFGVELSRLTNDERTVPLVVEKLVNYIEMHGLYTEGIYRKSGSTNKIKELKQGLDTDVNGVNLDDYNINVIASVFKQWLRDLPNPLMTFELYEEFLRAMGLQDKKEVIRGVYSVIDQLSRTHLNTLERLIFHLVRIALQEETNRMSANALAIVFAPCILRCPDTIDPLRSVQDIGKTTACVELIICEQMNKYRARLKDINTLEFAENKAKSRLTFIRRSMGKGPVHRLRYRTPSPPTSPRSPTAPEVMQDSGEEEPGRDPEVSEQQQVAMQQEEKVLTEQIESLQKEKEELTFEMLALEPRASDDETLESEASIGTADSSENLNVDSEGATSDYSERGPALAATRPKKSEGKSRRVLRKQPESLDSIDSCSTVSSVSSSYMQPTSRTHKLSLRSKSPSKRLYLSSPSESLDQPEQDGEERPQFTSRGTFNPEKGKQRLQGAKSSPQRHREQKKDPELSPQQVVVYGSNEFMV.

A Ras-associating domain is found at 15-113 (SELTLRIYPG…YRFLLREKNL (99 aa)). The Myosin motor domain occupies 147–1007 (KDFDDLCNLP…ERQRLQDLLH (861 aa)). Residues 176–196 (IYTYVGSILIVINPFKFLPIY) traverse the membrane as a helical segment. ATP is bound at residue 240-247 (GESGSGKT). Residues 767–802 (VNRRNPRTPLSDLQGSNAINQREGWNGRPGRQNRLS) are disordered. The span at 777–786 (SDLQGSNAIN) shows a compositional bias: polar residues. Residues 888–910 (LNKLMETLGQSQPYFVKCIRSNS) form an actin-binding region. IQ domains are found at residues 1012–1039 (SRIV…AACQ), 1063–1092 (QEGA…ASVL), 1102–1131 (QRRA…ATIR), and 1125–1154 (QRDA…QRLK). The segment at 1012 to 1149 (SRIVYLQRRF…LARQRFRELQ (138 aa)) is neck or regulatory domain. The tail stretch occupies residues 1150 to 2497 (KQRLKITHLP…LQGAKSSPQR (1348 aa)). Disordered regions lie at residues 1218-1254 (GMAP…RRMR), 1318-1409 (DKAP…STRR), 1424-1612 (NEAD…GNIF), 1630-1754 (NQEK…GRVR), 1799-1827 (RLSP…VKRR), and 1962-1983 (LDSS…KDTD). The span at 1229–1242 (TIRERPRTLEDPNQ) shows a compositional bias: basic and acidic residues. 2 stretches are compositionally biased toward polar residues: residues 1330-1349 (SPSS…STPD) and 1366-1390 (SLPT…NSVT). Composition is skewed to basic and acidic residues over residues 1399–1408 (PSKDKKESTR) and 1426–1435 (ADVKPLEVKD). Over residues 1437-1454 (AAQTSEPPSPAQPSTDSS) the composition is skewed to polar residues. Positions 1456-1525 (VLEKLEKLNE…LRRIEQSRQE (70 aa)) form a coiled coil. Composition is skewed to basic and acidic residues over residues 1458 to 1484 (EKLE…EMME), 1492 to 1523 (ILEE…EQSR), 1549 to 1566 (PARE…RPKD), and 1580 to 1589 (LESRGDEARS). Composition is skewed to polar residues over residues 1594–1604 (KPSNQNVNISM) and 1631–1641 (QEKTPGAQNEV). Basic residues predominate over residues 1656–1665 (PGHKKARMAR). Residues 1681–1690 (GESEEEEYDE) show a composition bias toward acidic residues. Basic and acidic residues-rich tracts occupy residues 1738-1753 (LGKH…DGRV) and 1810-1822 (LQRE…EPSP). The segment at 1990–2039 (GHIFKSTQYSIPTYCEYCSSLIWMMDKACVCKLCRYACHRKCCQKMTTKC) adopts a Phorbol-ester/DAG-type zinc-finger fold. The Rho-GAP domain maps to 2054–2242 (VELSRLTNDE…LIICEQMNKY (189 aa)). Disordered regions lie at residues 2274 to 2325 (PVHR…QEEK) and 2348 to 2522 (LEPR…EFMV). Positions 2317–2344 (QVAMQQEEKVLTEQIESLQKEKEELTFE) form a coiled coil. Residues 2366–2383 (TADSSENLNVDSEGATSD) show a composition bias toward polar residues. The segment covering 2413 to 2429 (SLDSIDSCSTVSSVSSS) has biased composition (low complexity). Positions 2436–2448 (RTHKLSLRSKSPS) are enriched in basic residues. Residues 2497–2506 (RHREQKKDPE) are compositionally biased toward basic and acidic residues.

The protein belongs to the TRAFAC class myosin-kinesin ATPase superfamily. Myosin family.

The protein resides in the membrane. It is found in the cytoplasm. It localises to the synapse. The protein localises to the cell projection. Its subcellular location is the growth cone. Myosins are actin-based motor molecules with ATPase activity. Unconventional myosins serve in intracellular movements. Regulates Rho by stimulating it's GTPase activity in neurons. Required for the regulation of neurite branching and motor neuron axon guidance. This is Unconventional myosin-IXAa (myo9aa) from Danio rerio (Zebrafish).